The sequence spans 1380 residues: Receptor-type adenylate cyclase A (1380 aa).

Residues 1–34 (MAMQIRPSLGGCLRHGGAGDHAARRLSRLRAAKV) lie on the Cytoplasmic side of the membrane. The chain crosses the membrane as a helical span at residues 35–55 (FVPTAVVCVLLCCAPWVMAEI). The Extracellular portion of the chain corresponds to 56-891 (TNDAEREPVY…SHALTPAQRN (836 aa)). N-linked (GlcNAc...) asparagine glycans are attached at residues Asn422, Asn478, Asn497, and Asn567. A helical transmembrane segment spans residues 892–912 (GLIAGCVVGAVVLIATCTLLL). Over 913–1380 (YCCMDNRNND…NPHYARHAFE (468 aa)) the chain is Cytoplasmic. The 155-residue stretch at 933–1087 (TLLFTDIESS…DTSNMAARTE (155 aa)) folds into the Guanylate cyclase domain. The Mg(2+) site is built by Asp938 and Asp981. Residues 1270-1298 (LAREGDSAAGGVRPRLPGSPVTSLPAGGS) are disordered.

The protein belongs to the adenylyl cyclase class-3 family. Mg(2+) is required as a cofactor.

The protein resides in the membrane. The catalysed reaction is ATP = 3',5'-cyclic AMP + diphosphate. Could act as a receptor for an unknown ligand. This chain is Receptor-type adenylate cyclase A (RAC-A), found in Leishmania donovani.